The following is a 178-amino-acid chain: Large ribosomal subunit protein uL6 (178 aa).

The protein belongs to the universal ribosomal protein uL6 family. As to quaternary structure, part of the 50S ribosomal subunit.

This protein binds to the 23S rRNA, and is important in its secondary structure. It is located near the subunit interface in the base of the L7/L12 stalk, and near the tRNA binding site of the peptidyltransferase center. The polypeptide is Large ribosomal subunit protein uL6 (Corynebacterium glutamicum (strain R)).